A 1340-amino-acid polypeptide reads, in one-letter code: Early transcription factor large subunit homolog (1340 aa).

The protein resides in the virion. In terms of biological role, putative initation factor. The chain is Early transcription factor large subunit homolog from Ornithodoros (relapsing fever ticks).